A 71-amino-acid polypeptide reads, in one-letter code: Small ribosomal subunit protein bS21 (71 aa).

Positions 34–44 are enriched in basic and acidic residues; sequence RREHYEKPTSE. The interval 34–71 is disordered; the sequence is RREHYEKPTSERKRKKAAAVKRHAKKLSRDNARRTRLY. Residues 45 to 59 are compositionally biased toward basic residues; it reads RKRKKAAAVKRHAKK. Positions 60–71 are enriched in basic and acidic residues; it reads LSRDNARRTRLY.

Belongs to the bacterial ribosomal protein bS21 family.

In Idiomarina loihiensis (strain ATCC BAA-735 / DSM 15497 / L2-TR), this protein is Small ribosomal subunit protein bS21.